The sequence spans 171 residues: Urease accessory protein UreE (171 aa).

Positions 143 to 171 are disordered; that stretch reads SGGHQHHHGHDHDHGHHGHDHDHHHPDHE. Basic and acidic residues predominate over residues 152 to 171; the sequence is HDHDHGHHGHDHDHHHPDHE.

This sequence belongs to the UreE family.

The protein resides in the cytoplasm. Involved in urease metallocenter assembly. Binds nickel. Probably functions as a nickel donor during metallocenter assembly. This chain is Urease accessory protein UreE, found in Brucella abortus biovar 1 (strain 9-941).